The primary structure comprises 108 residues: Cytochrome c oxidase subunit 1 (108 aa).

The chain crosses the membrane as a helical span at residues A10–V30. H49 provides a ligand contact to heme a3. The next 2 membrane-spanning stretches (helical) occupy residues F50 to L70 and L85 to H105. H51 contacts Fe(II)-heme a.

The protein belongs to the heme-copper respiratory oxidase family. Heme serves as cofactor. Requires Cu cation as cofactor.

The protein resides in the cell membrane. The catalysed reaction is 4 Fe(II)-[cytochrome c] + O2 + 8 H(+)(in) = 4 Fe(III)-[cytochrome c] + 2 H2O + 4 H(+)(out). It functions in the pathway energy metabolism; oxidative phosphorylation. The sequence is that of Cytochrome c oxidase subunit 1 (cbaA) from Thermus thermophilus.